A 463-amino-acid polypeptide reads, in one-letter code: A-type ATP synthase subunit B (463 aa).

The protein belongs to the ATPase alpha/beta chains family. As to quaternary structure, has multiple subunits with at least A(3), B(3), C, D, E, F, H, I and proteolipid K(x).

Its subcellular location is the cell membrane. Its function is as follows. Component of the A-type ATP synthase that produces ATP from ADP in the presence of a proton gradient across the membrane. The B chain is a regulatory subunit. This Thermococcus sp. (strain KI) protein is A-type ATP synthase subunit B.